Consider the following 670-residue polypeptide: Polar flagellar hook-associated protein 2 (670 aa).

The tract at residues 226–300 is disordered; that stretch reads PLQAPQQPDQ…RSSLRPEERI (75 aa). Residues 257–266 show a composition bias toward acidic residues; sequence AQDDAQDDAS. Residues 272–283 show a composition bias toward low complexity; sequence AAGAEAAKAGQE. Basic and acidic residues predominate over residues 284–300; sequence AIDKANQRSSLRPEERI. Positions 342 to 428 form a coiled coil; the sequence is GTLTDSYVTT…AQSSFEEYLG (87 aa).

The protein belongs to the FliD family. Homopentamer.

The protein resides in the secreted. Its subcellular location is the bacterial flagellum. In terms of biological role, required for the morphogenesis and for the elongation of the flagellar filament by facilitating polymerization of the flagellin monomers at the tip of growing filament. Forms a capping structure, which prevents flagellin subunits (transported through the central channel of the flagellum) from leaking out without polymerization at the distal end. Important for swimming motility. The sequence is that of Polar flagellar hook-associated protein 2 (fliDP) from Vibrio parahaemolyticus serotype O3:K6 (strain RIMD 2210633).